Reading from the N-terminus, the 242-residue chain is Biosynthetic peptidoglycan transglycosylase (242 aa).

Residues 19-39 form a helical membrane-spanning segment; it reads LMVVLAVFWGGGIALFSVAPV.

Belongs to the glycosyltransferase 51 family.

Its subcellular location is the cell inner membrane. The catalysed reaction is [GlcNAc-(1-&gt;4)-Mur2Ac(oyl-L-Ala-gamma-D-Glu-L-Lys-D-Ala-D-Ala)](n)-di-trans,octa-cis-undecaprenyl diphosphate + beta-D-GlcNAc-(1-&gt;4)-Mur2Ac(oyl-L-Ala-gamma-D-Glu-L-Lys-D-Ala-D-Ala)-di-trans,octa-cis-undecaprenyl diphosphate = [GlcNAc-(1-&gt;4)-Mur2Ac(oyl-L-Ala-gamma-D-Glu-L-Lys-D-Ala-D-Ala)](n+1)-di-trans,octa-cis-undecaprenyl diphosphate + di-trans,octa-cis-undecaprenyl diphosphate + H(+). It functions in the pathway cell wall biogenesis; peptidoglycan biosynthesis. In terms of biological role, peptidoglycan polymerase that catalyzes glycan chain elongation from lipid-linked precursors. The chain is Biosynthetic peptidoglycan transglycosylase from Shigella dysenteriae serotype 1 (strain Sd197).